The following is a 122-amino-acid chain: Large ribosomal subunit protein uL14 (122 aa).

It belongs to the universal ribosomal protein uL14 family. Part of the 50S ribosomal subunit. Forms a cluster with proteins L3 and L19. In the 70S ribosome, L14 and L19 interact and together make contacts with the 16S rRNA in bridges B5 and B8.

Its function is as follows. Binds to 23S rRNA. Forms part of two intersubunit bridges in the 70S ribosome. This Geotalea daltonii (strain DSM 22248 / JCM 15807 / FRC-32) (Geobacter daltonii) protein is Large ribosomal subunit protein uL14.